We begin with the raw amino-acid sequence, 222 residues long: UPF0488 protein C8orf33 homolog (222 aa).

Over residues 1–16 (MAEPGRPAREAPAASS) the composition is skewed to low complexity. Disordered regions lie at residues 1-103 (MAEP…AEQL), 119-146 (KTQRPTPKQKEQAVGAIRTLRSEKTPLP), and 186-210 (VSEATRKKSGRVCRPRPAERAKTTP). An N-acetylalanine modification is found at A2. The span at 17–28 (RKTHRAPRRPRP) shows a compositional bias: basic residues. R27 carries the omega-N-methylarginine modification. Residues 29–39 (SRSASGASEPP) show a composition bias toward low complexity. At S75 the chain carries Phosphoserine. The segment covering 93-103 (PPSAEAQAEQL) has biased composition (low complexity).

The protein belongs to the UPF0488 family.

The polypeptide is UPF0488 protein C8orf33 homolog (Mus musculus (Mouse)).